The chain runs to 416 residues: Tyrosine--tRNA ligase (416 aa).

Y40 contacts L-tyrosine. The 'HIGH' region motif lies at 45-54 (ATAKSLHVGS). Positions 177 and 181 each coordinate L-tyrosine. The short motif at 237 to 241 (KMGKS) is the 'KMSKS' region element. K240 contributes to the ATP binding site. In terms of domain architecture, S4 RNA-binding spans 351-415 (ISIVQLIVKS…GKKRHAMVQL (65 aa)).

It belongs to the class-I aminoacyl-tRNA synthetase family. TyrS type 1 subfamily. Homodimer.

It is found in the cytoplasm. The catalysed reaction is tRNA(Tyr) + L-tyrosine + ATP = L-tyrosyl-tRNA(Tyr) + AMP + diphosphate + H(+). Its function is as follows. Catalyzes the attachment of tyrosine to tRNA(Tyr) in a two-step reaction: tyrosine is first activated by ATP to form Tyr-AMP and then transferred to the acceptor end of tRNA(Tyr). The protein is Tyrosine--tRNA ligase of Roseobacter denitrificans (strain ATCC 33942 / OCh 114) (Erythrobacter sp. (strain OCh 114)).